The primary structure comprises 109 residues: MGMKIVVGDDVVVISGKDKGKMGKVIKVLRKKHFGKDVSFAIVSGVNICKKSVKATQKSDGGIINIAKPINLSNIALFDSTLGIRTRVGYKFIDEKKVRFMKSSGKVIE.

Belongs to the universal ribosomal protein uL24 family. In terms of assembly, part of the 50S ribosomal subunit.

In terms of biological role, one of two assembly initiator proteins, it binds directly to the 5'-end of the 23S rRNA, where it nucleates assembly of the 50S subunit. Its function is as follows. One of the proteins that surrounds the polypeptide exit tunnel on the outside of the subunit. This is Large ribosomal subunit protein uL24 from Ehrlichia canis (strain Jake).